The sequence spans 238 residues: Ribonuclease PH (238 aa).

Residues R86 and G124 to R126 each bind phosphate.

The protein belongs to the RNase PH family. As to quaternary structure, homohexameric ring arranged as a trimer of dimers.

The catalysed reaction is tRNA(n+1) + phosphate = tRNA(n) + a ribonucleoside 5'-diphosphate. Functionally, phosphorolytic 3'-5' exoribonuclease that plays an important role in tRNA 3'-end maturation. Removes nucleotide residues following the 3'-CCA terminus of tRNAs; can also add nucleotides to the ends of RNA molecules by using nucleoside diphosphates as substrates, but this may not be physiologically important. Probably plays a role in initiation of 16S rRNA degradation (leading to ribosome degradation) during starvation. The chain is Ribonuclease PH from Shigella boydii serotype 18 (strain CDC 3083-94 / BS512).